Here is a 577-residue protein sequence, read N- to C-terminus: Urease subunit alpha (577 aa).

Residues 136–577 enclose the Urease domain; sequence GTVDCHVHLI…LPMTQRYFLF (442 aa). Residues histidine 141, histidine 143, and lysine 224 each coordinate Ni(2+). An N6-carboxylysine modification is found at lysine 224. Histidine 226 contributes to the substrate binding site. 2 residues coordinate Ni(2+): histidine 253 and histidine 279. The Proton donor role is filled by histidine 327. Residue aspartate 367 participates in Ni(2+) binding.

It belongs to the metallo-dependent hydrolases superfamily. Urease alpha subunit family. Heterotrimer of UreA (gamma), UreB (beta) and UreC (alpha) subunits. Three heterotrimers associate to form the active enzyme. Requires Ni cation as cofactor. Carboxylation allows a single lysine to coordinate two nickel ions.

The protein resides in the cytoplasm. It catalyses the reaction urea + 2 H2O + H(+) = hydrogencarbonate + 2 NH4(+). Its pathway is nitrogen metabolism; urea degradation; CO(2) and NH(3) from urea (urease route): step 1/1. In Mycobacterium bovis (strain ATCC BAA-935 / AF2122/97), this protein is Urease subunit alpha.